The following is an 879-amino-acid chain: Pyruvate dehydrogenase phosphatase regulatory subunit, mitochondrial (879 aa).

A mitochondrion-targeting transit peptide spans 1-27 (MMFYRLLSIVGRQRASPGWQNWSSARN).

Belongs to the GcvT family. As to quaternary structure, heterodimer of a catalytic (PDP1) and a regulatory (PDPR) subunit.

Its subcellular location is the mitochondrion matrix. Functionally, decreases the sensitivity of PDP1 to magnesium ions, and this inhibition is reversed by the polyamine spermine. This is Pyruvate dehydrogenase phosphatase regulatory subunit, mitochondrial (PDPR) from Homo sapiens (Human).